Here is a 240-residue protein sequence, read N- to C-terminus: UDP-2,3-diacylglucosamine hydrolase (240 aa).

Residues Asp8, His10, Asp41, Asn79, and His114 each coordinate Mn(2+). Position 79-80 (79-80 (NR)) interacts with substrate. Substrate contacts are provided by Asp122, Ser160, Asn164, Lys167, and His195. Mn(2+)-binding residues include His195 and His197.

It belongs to the LpxH family. Mn(2+) serves as cofactor.

The protein resides in the cell inner membrane. The catalysed reaction is UDP-2-N,3-O-bis[(3R)-3-hydroxytetradecanoyl]-alpha-D-glucosamine + H2O = 2-N,3-O-bis[(3R)-3-hydroxytetradecanoyl]-alpha-D-glucosaminyl 1-phosphate + UMP + 2 H(+). It functions in the pathway glycolipid biosynthesis; lipid IV(A) biosynthesis; lipid IV(A) from (3R)-3-hydroxytetradecanoyl-[acyl-carrier-protein] and UDP-N-acetyl-alpha-D-glucosamine: step 4/6. Hydrolyzes the pyrophosphate bond of UDP-2,3-diacylglucosamine to yield 2,3-diacylglucosamine 1-phosphate (lipid X) and UMP by catalyzing the attack of water at the alpha-P atom. Involved in the biosynthesis of lipid A, a phosphorylated glycolipid that anchors the lipopolysaccharide to the outer membrane of the cell. The chain is UDP-2,3-diacylglucosamine hydrolase from Pectobacterium atrosepticum (strain SCRI 1043 / ATCC BAA-672) (Erwinia carotovora subsp. atroseptica).